Here is a 234-residue protein sequence, read N- to C-terminus: Orotate phosphoribosyltransferase (234 aa).

Lysine 37 provides a ligand contact to 5-phospho-alpha-D-ribose 1-diphosphate. Residue 45–46 participates in orotate binding; that stretch reads FF. 5-phospho-alpha-D-ribose 1-diphosphate-binding positions include 83–84, arginine 109, lysine 110, lysine 113, histidine 115, and 134–142; these read YK and DDVISAGTS. Orotate is bound by residues serine 138 and arginine 166.

Belongs to the purine/pyrimidine phosphoribosyltransferase family. PyrE subfamily. Homodimer. Requires Mg(2+) as cofactor.

It carries out the reaction orotidine 5'-phosphate + diphosphate = orotate + 5-phospho-alpha-D-ribose 1-diphosphate. It participates in pyrimidine metabolism; UMP biosynthesis via de novo pathway; UMP from orotate: step 1/2. Catalyzes the transfer of a ribosyl phosphate group from 5-phosphoribose 1-diphosphate to orotate, leading to the formation of orotidine monophosphate (OMP). In Methylibium petroleiphilum (strain ATCC BAA-1232 / LMG 22953 / PM1), this protein is Orotate phosphoribosyltransferase.